The chain runs to 407 residues: 5-aminolevulinate synthase 1 (407 aa).

Residues Arg-21, Ser-137, and Lys-156 each contribute to the substrate site. Positions 189, 217, and 245 each coordinate pyridoxal 5'-phosphate. Lys-248 is an active-site residue. An N6-(pyridoxal phosphate)lysine modification is found at Lys-248. The pyridoxal 5'-phosphate site is built by Ser-277 and Thr-278. Thr-363 contacts substrate.

The protein belongs to the class-II pyridoxal-phosphate-dependent aminotransferase family. In terms of assembly, homodimer. Requires pyridoxal 5'-phosphate as cofactor.

The catalysed reaction is succinyl-CoA + glycine + H(+) = 5-aminolevulinate + CO2 + CoA. Its pathway is porphyrin-containing compound metabolism; protoporphyrin-IX biosynthesis; 5-aminolevulinate from glycine: step 1/1. This Cereibacter sphaeroides (strain ATCC 17023 / DSM 158 / JCM 6121 / CCUG 31486 / LMG 2827 / NBRC 12203 / NCIMB 8253 / ATH 2.4.1.) (Rhodobacter sphaeroides) protein is 5-aminolevulinate synthase 1 (hemA).